We begin with the raw amino-acid sequence, 662 residues long: MEGALTARQIVNEGDSSLATELQEEPEESPGPVVDENIVSAKKQGQSTHNWSGDWSFWISSSTYKDRNEEYRQQFTHLPDSEKLIADYACALQKDILVQGRLYLSEKWLCFYSNIFRWETTISIALKNITFMTKEKTARLIPNAIQIITEGEKFFFTSFGARDRSYLIIFRLWQNVLLDKSLTRQEFWQLLQQNYGTELGLNAEEMEHLLSVEENVQPRSPGRSSVDDAGERDEKFSKAVSFTQESVSRASETEPLDGNSPKRGLGKEDSQSERNVRKSPSLASEKRISRAPSKSLDLNKNEYLSLDKSSTSDSVDEENIPEKDLQGRLYINRVFHISAERMFELLFTSSHFMQRFANSRNIIDVVSTPWTVESGGNQLRTMTYTIVLSNPLTGKYTAATEKQTLYKESREAQFYLVDSEVLTHDVPYHDYFYTLNRYCIVRSAKQRCRLRVSTDLKYRKQPWGLIKSLIEKNSWSSLESYFKKLESDLLMEESVLSQSIEDAGKHSSLRRRRRTLNRTAEPVPKLSSQRSSTDLGFEAKVDVTGKRKTVDSYDTALIVVMSIFLLLLVLLNVTLFLKLSKIEHATQSFYQLHLQGEKSLNLVSDRFSRTENIQKNKDQAHRLKGVLQDSIVMLEQLKSSLIMLQKTFDLLNKNKSGVAVES.

The disordered stretch occupies residues 1 to 33 (MEGALTARQIVNEGDSSLATELQEEPEESPGPV). Positions 70-176 (EYRQQFTHLP…LIIFRLWQNV (107 aa)) constitute a GRAM domain. A disordered region spans residues 212–294 (VEENVQPRSP…EKRISRAPSK (83 aa)). Polar residues predominate over residues 240-250 (VSFTQESVSRA). The segment covering 265 to 276 (LGKEDSQSERNV) has biased composition (basic and acidic residues). Residues 326–497 (QGRLYINRVF…DLLMEESVLS (172 aa)) form the VASt domain. Positions 506–530 (HSSLRRRRRTLNRTAEPVPKLSSQR) are disordered. Over residues 507–516 (SSLRRRRRTL) the composition is skewed to basic residues. A helical membrane pass occupies residues 557–577 (LIVVMSIFLLLLVLLNVTLFL).

As to expression, highly expressed in the liver. Also found in the testis.

The protein resides in the endoplasmic reticulum membrane. Its subcellular location is the cell membrane. Functionally, cholesterol transporter that mediates non-vesicular transport of cholesterol from the plasma membrane (PM) to the endoplasmic reticulum (ER). Contains unique domains for binding cholesterol and the PM, thereby serving as a molecular bridge for the transfer of cholesterol from the PM to the ER. Plays a crucial role in cholesterol homeostasis and has the unique ability to localize to the PM based on the level of membrane cholesterol. In lipid-poor conditions localizes to the ER membrane and in response to excess cholesterol in the PM is recruited to the endoplasmic reticulum-plasma membrane contact sites (EPCS) which is mediated by the GRAM domain. At the EPCS, the sterol-binding VASt/ASTER domain binds to the cholesterol in the PM and facilitates its transfer from the PM to ER. This chain is Protein Aster-C (Gramd1c), found in Mus musculus (Mouse).